Reading from the N-terminus, the 355-residue chain is Protein RecA (355 aa).

ATP is bound at residue 74 to 81 (GPESSGKT).

It belongs to the RecA family.

The protein resides in the cytoplasm. Its function is as follows. Can catalyze the hydrolysis of ATP in the presence of single-stranded DNA, the ATP-dependent uptake of single-stranded DNA by duplex DNA, and the ATP-dependent hybridization of homologous single-stranded DNAs. It interacts with LexA causing its activation and leading to its autocatalytic cleavage. The polypeptide is Protein RecA (Cytophaga hutchinsonii (strain ATCC 33406 / DSM 1761 / CIP 103989 / NBRC 15051 / NCIMB 9469 / D465)).